A 434-amino-acid chain; its full sequence is Alpha-enolase (434 aa).

Ser2 carries the post-translational modification N-acetylserine. Lys5 bears the N6-acetyllysine mark. Residue Ser27 is modified to Phosphoserine. Ser40 is a Mg(2+) binding site. Position 44 is a phosphotyrosine (Tyr44). The residue at position 60 (Lys60) is an N6-acetyllysine; alternate. The residue at position 60 (Lys60) is an N6-succinyllysine; alternate. Residues Lys64 and Lys71 each carry the N6-acetyllysine modification. Residue Lys89 is modified to N6-acetyllysine; alternate. At Lys89 the chain carries N6-succinyllysine; alternate. N6-acetyllysine is present on residues Lys92 and Lys126. The substrate site is built by His158 and Glu167. Residues Lys193 and Lys199 each carry the N6-acetyllysine modification. Lys202 bears the N6-acetyllysine; alternate mark. Lys202 participates in a covalent cross-link: Glycyl lysine isopeptide (Lys-Gly) (interchain with G-Cter in SUMO2); alternate. The Proton donor role is filled by Glu210. 2 positions are modified to N6-acetyllysine; alternate: Lys228 and Lys233. The residue at position 228 (Lys228) is an N6-succinyllysine; alternate. Position 228 is an N6-(2-hydroxyisobutyryl)lysine; alternate (Lys228). Position 233 is an N6-malonyllysine; alternate (Lys233). Asp245 provides a ligand contact to Mg(2+). Ser254 carries the post-translational modification Phosphoserine. At Lys256 the chain carries N6-acetyllysine. Ser263 and Ser272 each carry phosphoserine. Lys281 is subject to N6-acetyllysine; alternate. An N6-(2-hydroxyisobutyryl)lysine; alternate modification is found at Lys281. Position 285 is an N6-acetyllysine (Lys285). Phosphotyrosine is present on Tyr287. Phosphoserine is present on Ser291. Residues Glu293 and Asp318 each coordinate Mg(2+). Residues Glu293 and Asp318 each coordinate substrate. N6-acetyllysine is present on residues Lys335 and Lys343. Lys343 acts as the Proton acceptor in catalysis. Residues 370 to 373 (SHRS) and Lys394 contribute to the substrate site. A required for interaction with PLG region spans residues 405-434 (AKYNQLLRIEEELGSKAKFAGRNFRNPLAK). The residue at position 406 (Lys406) is an N6-acetyllysine. Lys420 is modified (N6-acetyllysine; alternate). Lys420 carries the post-translational modification N6-succinyllysine; alternate. Lys420 carries the post-translational modification N6-malonyllysine; alternate.

The protein belongs to the enolase family. Mammalian enolase is composed of 3 isozyme subunits, alpha, beta and gamma, which can form homodimers or heterodimers which are cell-type and development-specific. ENO1 interacts with PLG in the neuronal plasma membrane and promotes its activation. The C-terminal lysine is required for this binding. Interacts with ENO4 and PGAM2. Interacts with CMTM6. It depends on Mg(2+) as a cofactor. ISGylated. Post-translationally, lysine 2-hydroxyisobutyrylation (Khib) by p300/EP300 activates the phosphopyruvate hydratase activity.

It localises to the cytoplasm. Its subcellular location is the cell membrane. The enzyme catalyses (2R)-2-phosphoglycerate = phosphoenolpyruvate + H2O. It functions in the pathway carbohydrate degradation; glycolysis; pyruvate from D-glyceraldehyde 3-phosphate: step 4/5. Its function is as follows. Glycolytic enzyme the catalyzes the conversion of 2-phosphoglycerate to phosphoenolpyruvate. In addition to glycolysis, involved in various processes such as growth control, hypoxia tolerance and allergic responses. May also function in the intravascular and pericellular fibrinolytic system due to its ability to serve as a receptor and activator of plasminogen on the cell surface of several cell-types such as leukocytes and neurons. Stimulates immunoglobulin production. This is Alpha-enolase (ENO1) from Pongo abelii (Sumatran orangutan).